We begin with the raw amino-acid sequence, 280 residues long: MKMDVIAREQIIYGSLQGSNKNKDWTSRLPPPSAYTLDLMSKKAKTTTGGSSNGSNATATSTTTSTSSSIKHKQPAGSSNNNVGQSQSKKTKPSGSYNSNSNYYYYAADEEEGGSADYALSNYDKKAVEELSLRLLDELRAAKSRHLTCTEVSLPCDLTPSVAREIIRVSEKEPRGIRGCTIYIEFEDEPKNSRRIASIKVDSDTVSTFEVYLTLRQDHRGWTSLLPQFMKSLARTITISPEYTITKNKLYSADGLGARRSYSFGSHAHRPSAAIATPTN.

Residues 39 to 96 (LMSKKAKTTTGGSSNGSNATATSTTTSTSSSIKHKQPAGSSNNNVGQSQSKKTKPSGS) are disordered. Composition is skewed to low complexity over residues 46–69 (TTTG…TSSS) and 77–96 (GSSN…PSGS).

Belongs to the DDIT4 family.

Its subcellular location is the cytoplasm. Its function is as follows. Inhibits cell growth by regulating the Tor pathway upstream of the Tsc1-Tsc2 complex and downstream of Akt1. Acts as a cell death activator during head development. This chain is Protein scylla (scyl), found in Drosophila melanogaster (Fruit fly).